The sequence spans 194 residues: Large ribosomal subunit protein eL15 (194 aa).

The segment at 160 to 194 (RGLTSAGKKGRGLMYKGKGTEKVRPSVRANSKKAK) is disordered.

The protein belongs to the eukaryotic ribosomal protein eL15 family.

This Methanococcus maripaludis (strain C7 / ATCC BAA-1331) protein is Large ribosomal subunit protein eL15.